The chain runs to 461 residues: Adenosylmethionine-8-amino-7-oxononanoate aminotransferase (461 aa).

A pyridoxal 5'-phosphate-binding site is contributed by glycine 117 to alanine 118. Residue tyrosine 150 coordinates substrate. Aspartate 263 is a pyridoxal 5'-phosphate binding site. Substrate-binding residues include lysine 296, glycine 331, and arginine 426. Lysine 296 bears the N6-(pyridoxal phosphate)lysine mark.

It belongs to the class-III pyridoxal-phosphate-dependent aminotransferase family. BioA subfamily. In terms of assembly, homodimer. Pyridoxal 5'-phosphate is required as a cofactor.

The protein localises to the cytoplasm. It carries out the reaction (8S)-8-amino-7-oxononanoate + S-adenosyl-L-methionine = S-adenosyl-4-methylsulfanyl-2-oxobutanoate + (7R,8S)-7,8-diammoniononanoate. It functions in the pathway cofactor biosynthesis; biotin biosynthesis; 7,8-diaminononanoate from 8-amino-7-oxononanoate (SAM route): step 1/1. In terms of biological role, catalyzes the transfer of the alpha-amino group from S-adenosyl-L-methionine (SAM) to 7-keto-8-aminopelargonic acid (KAPA) to form 7,8-diaminopelargonic acid (DAPA). It is the only aminotransferase known to utilize SAM as an amino donor. The sequence is that of Adenosylmethionine-8-amino-7-oxononanoate aminotransferase from Methanocaldococcus jannaschii (strain ATCC 43067 / DSM 2661 / JAL-1 / JCM 10045 / NBRC 100440) (Methanococcus jannaschii).